Here is a 295-residue protein sequence, read N- to C-terminus: Origin of replication complex subunit 6 (295 aa).

The tract at residues 212-295 (PSKRKHDDDS…MALEVSSAAN (84 aa)) is disordered. A compositionally biased stretch (acidic residues) spans 220–236 (DSDSSGESSGDDQDELD). Positions 254 to 263 (WKSSVLSNKQ) are enriched in polar residues.

This sequence belongs to the ORC6 family. In terms of assembly, component of the origin recognition complex (ORC) composed of at least ORC1, ORC2, ORC3, ORC4, ORC5 and ORC6. ORC is regulated in a cell-cycle and development dependent manner. It is sequentially assembled at the exit from anaphase of mitosis and disassembled as cells enter S phase.

Its subcellular location is the nucleus. Functionally, component of the origin recognition complex (ORC) that binds origins of replication. DNA-binding is ATP-dependent. The specific DNA sequences that define origins of replication have not been identified yet. ORC is required to assemble the pre-replication complex necessary to initiate DNA replication. The polypeptide is Origin of replication complex subunit 6 (Oryza sativa subsp. japonica (Rice)).